The following is a 1193-amino-acid chain: Sperm-associated antigen 5 (1193 aa).

Residues Met-1 to Ser-48 form a disordered region. Ser-12, Ser-14, Ser-43, Ser-62, and Ser-66 each carry phosphoserine. Positions Ala-35–Ser-48 are enriched in polar residues. The segment at Glu-96–Glu-117 is disordered. Phosphothreonine; by GSK3-beta is present on Thr-111. Phosphoserine occurs at positions 135, 159, and 334. At Thr-336 the chain carries Phosphothreonine. 3 positions are modified to phosphoserine: Ser-341, Ser-353, and Ser-362. The segment covering Pro-390–Leu-405 has biased composition (polar residues). The tract at residues Pro-390–Glu-416 is disordered. The interaction with KNSTRN stretch occupies residues Asn-482 to Ala-850. Coiled-coil stretches lie at residues Cys-545–Glu-608 and Gln-759–Arg-868. Thr-937 bears the Phosphothreonine; by GSK3-beta mark. The residue at position 974 (Ser-974) is a Phosphoserine; by GSK3-beta. Phosphothreonine; by GSK3-beta is present on Thr-978. Residues Glu-979 to Ser-1174 are a coiled coil.

As to quaternary structure, homodimer, with a globular head domain and a long stalk. Homooligomer; the globular head domains associate, resulting in aster-like structures. Binds to microtubules in the mitotic spindle. Interacts with DCLRE1B/Apollo. Part of an astrin (SPAG5)-kinastrin (SKAP) complex containing KNSTRN, SPAG5, PLK1, DYNLL1 and SGO2. Interacts with KNSTRN. Interacts with RPTOR; this interaction competes with RPTOR binding to MTOR, resulting in decreased mTORC1 formation. Interacts with G3BP1. The complex formed with G3BP1 AND RPTOR is increased by oxidative stress. Interacts with OSBPL8, PCM1 and CDK5RAP2. Interacts (via C-terminus) with NUMA1 (via C-terminus); this interaction promotes the recruitment of SPAG5 to the microtubules at spindle poles in a dynein-dynactin-dependent manner. Interacts with DYNLL1. Post-translationally, phosphorylated by AURKA. As to expression, highly expressed in testis. Detected at low levels in placenta, liver, pancreas, thymus and colon.

Its subcellular location is the cytoplasm. It is found in the cytoskeleton. The protein resides in the spindle. The protein localises to the spindle pole. It localises to the chromosome. Its subcellular location is the centromere. It is found in the kinetochore. The protein resides in the midbody. The protein localises to the microtubule organizing center. It localises to the centrosome. Its subcellular location is the cytoplasmic granule. It is found in the centriolar satellite. Essential component of the mitotic spindle required for normal chromosome segregation and progression into anaphase. Required for chromosome alignment, normal timing of sister chromatid segregation, and maintenance of spindle pole architecture. In complex with SKAP, promotes stable microtubule-kinetochore attachments. May contribute to the regulation of separase activity. May regulate AURKA localization to mitotic spindle, but not to centrosomes and CCNB1 localization to both mitotic spindle and centrosomes. Involved in centriole duplication. Required for CDK5RAP2, CEP152, WDR62 and CEP63 centrosomal localization and promotes the centrosomal localization of CDK2. In non-mitotic cells, upon stress induction, inhibits mammalian target of rapamycin complex 1 (mTORC1) association and recruits the mTORC1 component RPTOR to stress granules (SGs), thereby preventing mTORC1 hyperactivation-induced apoptosis. May enhance GSK3B-mediated phosphorylation of other substrates, such as MAPT/TAU. The polypeptide is Sperm-associated antigen 5 (SPAG5) (Homo sapiens (Human)).